A 197-amino-acid polypeptide reads, in one-letter code: RNA-binding protein Rsf1 (197 aa).

One can recognise an RRM domain in the interval 7-80; that stretch reads TRVYVGNLTD…SQLRVEISKG (74 aa). Residues 74–197 are disordered; the sequence is RVEISKGRPR…SRSPVGNHRF (124 aa). Positions 89–102 are enriched in basic and acidic residues; it reads GPMDRGGRRGDFGR. T106 is modified (phosphothreonine). 2 stretches are compositionally biased toward low complexity: residues 117–144 and 166–176; these read QRGS…SYNG and RYSSGSSASYG. Residues S168, S171, S174, S188, and S190 each carry the phosphoserine modification.

It belongs to the splicing factor SR family. Post-translationally, extensively phosphorylated on serine residues in the RS domain.

It localises to the nucleus. May control important aspects of development. The chain is RNA-binding protein Rsf1 (Rsf1) from Drosophila melanogaster (Fruit fly).